Here is a 195-residue protein sequence, read N- to C-terminus: Imidazoleglycerol-phosphate dehydratase (195 aa).

It belongs to the imidazoleglycerol-phosphate dehydratase family.

It is found in the cytoplasm. It carries out the reaction D-erythro-1-(imidazol-4-yl)glycerol 3-phosphate = 3-(imidazol-4-yl)-2-oxopropyl phosphate + H2O. It functions in the pathway amino-acid biosynthesis; L-histidine biosynthesis; L-histidine from 5-phospho-alpha-D-ribose 1-diphosphate: step 6/9. This is Imidazoleglycerol-phosphate dehydratase from Haloarcula marismortui (strain ATCC 43049 / DSM 3752 / JCM 8966 / VKM B-1809) (Halobacterium marismortui).